Here is a 705-residue protein sequence, read N- to C-terminus: Methionine--tRNA ligase (705 aa).

The 'HIGH' region signature appears at Pro-17 to His-27. Zn(2+) contacts are provided by Cys-149, Cys-152, Cys-162, and Cys-165. The 'KMSKS' region motif lies at Lys-347–Ser-351. Lys-350 contributes to the ATP binding site. The tRNA-binding domain occupies Glu-604–Gln-705.

Belongs to the class-I aminoacyl-tRNA synthetase family. MetG type 1 subfamily. In terms of assembly, homodimer. The cofactor is Zn(2+).

Its subcellular location is the cytoplasm. It carries out the reaction tRNA(Met) + L-methionine + ATP = L-methionyl-tRNA(Met) + AMP + diphosphate. Is required not only for elongation of protein synthesis but also for the initiation of all mRNA translation through initiator tRNA(fMet) aminoacylation. In Chlorobium chlorochromatii (strain CaD3), this protein is Methionine--tRNA ligase.